The following is a 322-amino-acid chain: Ribosomal RNA small subunit methyltransferase H (322 aa).

S-adenosyl-L-methionine is bound by residues Gly42–His44, Asp62, Phe86, Asp107, and Gln114.

The protein belongs to the methyltransferase superfamily. RsmH family.

It localises to the cytoplasm. It catalyses the reaction cytidine(1402) in 16S rRNA + S-adenosyl-L-methionine = N(4)-methylcytidine(1402) in 16S rRNA + S-adenosyl-L-homocysteine + H(+). Specifically methylates the N4 position of cytidine in position 1402 (C1402) of 16S rRNA. In Janthinobacterium sp. (strain Marseille) (Minibacterium massiliensis), this protein is Ribosomal RNA small subunit methyltransferase H.